The following is a 95-amino-acid chain: Defensin-like protein 247 (95 aa).

A signal peptide spans 1-24 (MKFAAIFLVTCVFFSLFSSNLSQG). 4 disulfides stabilise this stretch: Cys-37–Cys-94, Cys-48–Cys-77, Cys-56–Cys-87, and Cys-75–Cys-89.

The protein belongs to the DEFL family.

Its subcellular location is the secreted. The polypeptide is Defensin-like protein 247 (SCRL6) (Arabidopsis thaliana (Mouse-ear cress)).